The chain runs to 256 residues: MEKEAIYKLIRESPPGEVNQVVHDIRDIGLSDEEAIHEQLKLYHEDYNSSVSISDDEKVIISADNRLEGNRYYDQVLQKSFTINYETMEAENVEDYTEAIKIPDEIVKQIKKVASDHYLSDVTFGIIKKSDEVESFTIVLVSSKYNPKNYWNGSWRCICNYNVSEKKLEGRSHIRVHYYEDGNVWLDASRPISATVEETSKLYEVLAQVENGIQQSFNVELSSLNDKKFKELRRQLPVTRQKINWENVSGIRMRNT.

Ser-31 is subject to Phosphoserine.

The protein belongs to the F-actin-capping protein alpha subunit family. As to quaternary structure, component of the F-actin capping complex, composed of a heterodimer of an alpha and a beta subunit.

It localises to the cytoplasm. Its subcellular location is the cytoskeleton. The protein localises to the actin patch. In terms of biological role, F-actin-capping proteins bind in a Ca(2+)-independent manner to the fast growing ends of actin filaments (barbed end) thereby blocking the exchange of subunits at these ends. Unlike other capping proteins (such as gelsolin and severin), these proteins do not sever actin filaments. Competes with formin cdc12 for attachment to the actin filaments barbed ends. Slowly replaces cdc12 on the barbed ends in preparation for filament disassembly during contractile ring constriction. In Schizosaccharomyces pombe (strain 972 / ATCC 24843) (Fission yeast), this protein is F-actin-capping protein subunit alpha (acp1).